We begin with the raw amino-acid sequence, 753 residues long: 5-methyltetrahydropteroyltriglutamate--homocysteine methyltransferase (753 aa).

5-methyltetrahydropteroyltri-L-glutamate is bound by residues 17–20 (RELK) and Lys-117. L-homocysteine is bound by residues 431–433 (IGS) and Glu-484. L-methionine contacts are provided by residues 431–433 (IGS) and Glu-484. 5-methyltetrahydropteroyltri-L-glutamate is bound by residues 515–516 (RC) and Trp-561. Residue Asp-599 coordinates L-homocysteine. An L-methionine-binding site is contributed by Asp-599. Glu-605 serves as a coordination point for 5-methyltetrahydropteroyltri-L-glutamate. The Zn(2+) site is built by His-641, Cys-643, and Glu-665. Residue His-694 is the Proton donor of the active site. Zn(2+) is bound at residue Cys-726.

Belongs to the vitamin-B12 independent methionine synthase family. Zn(2+) is required as a cofactor.

It catalyses the reaction 5-methyltetrahydropteroyltri-L-glutamate + L-homocysteine = tetrahydropteroyltri-L-glutamate + L-methionine. It functions in the pathway amino-acid biosynthesis; L-methionine biosynthesis via de novo pathway; L-methionine from L-homocysteine (MetE route): step 1/1. In terms of biological role, catalyzes the transfer of a methyl group from 5-methyltetrahydrofolate to homocysteine resulting in methionine formation. The chain is 5-methyltetrahydropteroyltriglutamate--homocysteine methyltransferase from Shigella sonnei (strain Ss046).